Here is a 172-residue protein sequence, read N- to C-terminus: MSRTQQAPMNAGSASGVQVASPLSQDNSTIRVSGTLRLRGDNGTRNNGEDLTTTRHIRWSEDVVDNEGMGKKSSKVCCIYHKDRPVGESSSESDDTDSSSDDCSDCDSDTRIPTHKGDQGGEASSRCSPSRLAERKCGTSCSKRHSKQRSRRHMSPNAYEKMPKFKGQPGKR.

The segment covering 1-32 has biased composition (polar residues); sequence MSRTQQAPMNAGSASGVQVASPLSQDNSTIRV. Disordered stretches follow at residues 1–53 and 83–172; these read MSRT…DLTT and DRPV…PGKR. Over residues 91-107 the composition is skewed to acidic residues; it reads SESDDTDSSSDDCSDCD. A compositionally biased stretch (basic and acidic residues) spans 108-119; the sequence is SDTRIPTHKGDQ. The span at 142–154 shows a compositional bias: basic residues; it reads SKRHSKQRSRRHM.

This sequence belongs to the YPI1 family.

It localises to the nucleus. In terms of biological role, regulator of type 1 phosphatases which maintains protein phosphatase activity under strict control. This Aspergillus clavatus (strain ATCC 1007 / CBS 513.65 / DSM 816 / NCTC 3887 / NRRL 1 / QM 1276 / 107) protein is Type 1 phosphatases regulator ypi1 (ypi1).